The following is a 332-amino-acid chain: Anthranilate phosphoribosyltransferase (332 aa).

Residues Gly-78, 81–82 (GD), Ser-86, 88–91 (NIST), 106–114 (KHGNKSITS), and Ser-118 contribute to the 5-phospho-alpha-D-ribose 1-diphosphate site. Gly-78 lines the anthranilate pocket. Ser-90 is a Mg(2+) binding site. Asn-109 contributes to the anthranilate binding site. Residue Arg-163 coordinates anthranilate. Asp-222 and Glu-223 together coordinate Mg(2+).

This sequence belongs to the anthranilate phosphoribosyltransferase family. As to quaternary structure, homodimer. Mg(2+) is required as a cofactor.

The enzyme catalyses N-(5-phospho-beta-D-ribosyl)anthranilate + diphosphate = 5-phospho-alpha-D-ribose 1-diphosphate + anthranilate. Its pathway is amino-acid biosynthesis; L-tryptophan biosynthesis; L-tryptophan from chorismate: step 2/5. Its function is as follows. Catalyzes the transfer of the phosphoribosyl group of 5-phosphorylribose-1-pyrophosphate (PRPP) to anthranilate to yield N-(5'-phosphoribosyl)-anthranilate (PRA). In Staphylococcus aureus (strain USA300), this protein is Anthranilate phosphoribosyltransferase.